Here is an 822-residue protein sequence, read N- to C-terminus: Valine--tRNA ligase (822 aa).

Residues 41-51 (PNVTGQLHLGH) carry the 'HIGH' region motif. A 'KMSKS' region motif is present at residues 511 to 515 (KMSKS). Lys-514 is an ATP binding site. Residues 765-822 (EQKGRELKEIQFLKSEILRAEKILTNKGFLEKAPREKIDLERTKLEKLKEKLAFYEKK) are a coiled coil.

This sequence belongs to the class-I aminoacyl-tRNA synthetase family. ValS type 1 subfamily. As to quaternary structure, monomer.

The protein resides in the cytoplasm. The catalysed reaction is tRNA(Val) + L-valine + ATP = L-valyl-tRNA(Val) + AMP + diphosphate. Its function is as follows. Catalyzes the attachment of valine to tRNA(Val). As ValRS can inadvertently accommodate and process structurally similar amino acids such as threonine, to avoid such errors, it has a 'posttransfer' editing activity that hydrolyzes mischarged Thr-tRNA(Val) in a tRNA-dependent manner. This Mesomycoplasma hyopneumoniae (strain 7448) (Mycoplasma hyopneumoniae) protein is Valine--tRNA ligase.